The primary structure comprises 314 residues: PDZ domain-containing protein GIPC2 (314 aa).

A compositionally biased stretch (basic residues) spans Met-1–Ala-12. The tract at residues Met-1 to Pro-36 is disordered. Residues Lys-13 to Arg-25 show a composition bias toward basic and acidic residues. In terms of domain architecture, PDZ spans Glu-117–Glu-197.

The protein belongs to the GIPC family. Probably interacts with SEMA5A.

The protein localises to the cytoplasm. The protein is PDZ domain-containing protein GIPC2 (Gipc2) of Rattus norvegicus (Rat).